The chain runs to 362 residues: 2-aminoethylphosphonate--pyruvate transaminase (362 aa).

At Lys193 the chain carries N6-(pyridoxal phosphate)lysine.

It belongs to the class-V pyridoxal-phosphate-dependent aminotransferase family. PhnW subfamily. In terms of assembly, homodimer. Pyridoxal 5'-phosphate serves as cofactor.

The enzyme catalyses (2-aminoethyl)phosphonate + pyruvate = phosphonoacetaldehyde + L-alanine. Involved in phosphonate degradation. This chain is 2-aminoethylphosphonate--pyruvate transaminase, found in Phocaeicola vulgatus (strain ATCC 8482 / DSM 1447 / JCM 5826 / CCUG 4940 / NBRC 14291 / NCTC 11154) (Bacteroides vulgatus).